The following is a 279-amino-acid chain: Ribosomal RNA small subunit methyltransferase A (279 aa).

Residues Leu42, Gly67, Glu88, Asp113, and Asn129 each coordinate S-adenosyl-L-methionine.

Belongs to the class I-like SAM-binding methyltransferase superfamily. rRNA adenine N(6)-methyltransferase family. RsmA subfamily.

It localises to the cytoplasm. It carries out the reaction adenosine(1518)/adenosine(1519) in 16S rRNA + 4 S-adenosyl-L-methionine = N(6)-dimethyladenosine(1518)/N(6)-dimethyladenosine(1519) in 16S rRNA + 4 S-adenosyl-L-homocysteine + 4 H(+). Specifically dimethylates two adjacent adenosines (A1518 and A1519) in the loop of a conserved hairpin near the 3'-end of 16S rRNA in the 30S particle. May play a critical role in biogenesis of 30S subunits. The protein is Ribosomal RNA small subunit methyltransferase A of Thermotoga maritima (strain ATCC 43589 / DSM 3109 / JCM 10099 / NBRC 100826 / MSB8).